The sequence spans 336 residues: Pyridoxal 5'-phosphate synthase subunit PdxS (336 aa).

Asp-30 contributes to the D-ribose 5-phosphate binding site. Lys-87 acts as the Schiff-base intermediate with D-ribose 5-phosphate in catalysis. Gly-159 is a D-ribose 5-phosphate binding site. Arg-171 provides a ligand contact to D-glyceraldehyde 3-phosphate. D-ribose 5-phosphate-binding positions include Gly-257 and 278–279 (GS).

The protein belongs to the PdxS/SNZ family. In the presence of PdxT, forms a dodecamer of heterodimers.

It catalyses the reaction aldehydo-D-ribose 5-phosphate + D-glyceraldehyde 3-phosphate + L-glutamine = pyridoxal 5'-phosphate + L-glutamate + phosphate + 3 H2O + H(+). It participates in cofactor biosynthesis; pyridoxal 5'-phosphate biosynthesis. In terms of biological role, catalyzes the formation of pyridoxal 5'-phosphate from ribose 5-phosphate (RBP), glyceraldehyde 3-phosphate (G3P) and ammonia. The ammonia is provided by the PdxT subunit. Can also use ribulose 5-phosphate and dihydroxyacetone phosphate as substrates, resulting from enzyme-catalyzed isomerization of RBP and G3P, respectively. This Thermoplasma acidophilum (strain ATCC 25905 / DSM 1728 / JCM 9062 / NBRC 15155 / AMRC-C165) protein is Pyridoxal 5'-phosphate synthase subunit PdxS.